A 290-amino-acid polypeptide reads, in one-letter code: Arylamine N-acetyltransferase 1 (290 aa).

Position 1 is an N-acetylmethionine (Met1). Catalysis depends on Cys68, which acts as the Acyl-thioester intermediate. Residue Ser103 coordinates CoA. Residue 106 to 107 (VH) participates in substrate binding. Residues His107 and Asp122 contribute to the active site. Tyr208 contacts CoA.

It belongs to the arylamine N-acetyltransferase family.

It localises to the cytoplasm. It carries out the reaction an arylamine + acetyl-CoA = an N-acetylarylamine + CoA. Functionally, participates in the detoxification of a plethora of hydrazine and arylamine drugs. Isoniazid, 2-aminofluorene and anisidine are preferred substrates for NAT-1. No activity with p-aminobenzoic acid (PABA) nor SMZ. The protein is Arylamine N-acetyltransferase 1 (Nat1) of Mus musculus (Mouse).